Consider the following 431-residue polypeptide: MSERVPSIRAEIVSVGDELLKGQRVNTNASFIARSLGSVGIPVVRVTACSDFESEMASVFREALGRADVVLVTGGLGPTRDDRTRKAAGELLGLGLRLDPDALREVERRVTAHGRTMSELMQGQAMVLDGSRAIPNTRGTAAGMIIPAGERFGGSHLVLMPGVPVEMEAMMELTVQPWLRGLSDTTIIHTPVKTTGIGESTLADMLPDIEDSLPEGTSLAYLPHGAGVDLMVSTIARDPLRAERDNAAVVEAIRERAAAFIFAVGTASLEETIIGMLASGGLTLSVAESCTGGLIASRLTDVPGSSVSLMQGFIVYSNSAKEELLGVSRGLIDTHGAVSEEVACAMALGCLRRSGTSIALATTGIAGPGGGSPEKPVGTLCLAIARQVPGSGPSVGVRTLHMHGDRLQNKHRFSEAALRDLWVALRGEQGG.

The protein belongs to the CinA family.

The sequence is that of CinA-like protein from Chlorobium luteolum (strain DSM 273 / BCRC 81028 / 2530) (Pelodictyon luteolum).